The following is a 362-amino-acid chain: 3-dehydroquinate synthase (362 aa).

Residues 71-76, 105-109, 129-130, Lys142, Lys151, and 169-172 contribute to the NAD(+) site; these read DGEQYK, GVVGD, TT, and CLKT. The Zn(2+) site is built by Glu184, His247, and His264.

Belongs to the sugar phosphate cyclases superfamily. Dehydroquinate synthase family. It depends on Co(2+) as a cofactor. Zn(2+) serves as cofactor. Requires NAD(+) as cofactor.

The protein resides in the cytoplasm. The enzyme catalyses 7-phospho-2-dehydro-3-deoxy-D-arabino-heptonate = 3-dehydroquinate + phosphate. Its pathway is metabolic intermediate biosynthesis; chorismate biosynthesis; chorismate from D-erythrose 4-phosphate and phosphoenolpyruvate: step 2/7. Its function is as follows. Catalyzes the conversion of 3-deoxy-D-arabino-heptulosonate 7-phosphate (DAHP) to dehydroquinate (DHQ). In Escherichia coli O127:H6 (strain E2348/69 / EPEC), this protein is 3-dehydroquinate synthase.